A 1827-amino-acid polypeptide reads, in one-letter code: Sucrase-isomaltase, intestinal (1827 aa).

At alanine 2 to threonine 12 the chain is on the cytoplasmic side. Serine 7 is modified (phosphoserine; by PKA). The chain crosses the membrane as a helical; Signal-anchor for type II membrane protein span at residues leucine 13 to alanine 32. The Lumenal segment spans residues threonine 33–serine 1827. Residues glutamate 39–proline 64 form a disordered region. The span at proline 43–proline 64 shows a compositional bias: low complexity. A P-type 1 domain is found at valine 61 to aspartate 110. 3 disulfides stabilise this stretch: cysteine 63-cysteine 94, cysteine 77-cysteine 93, and cysteine 88-cysteine 106. N-linked (GlcNAc...) asparagine glycosylation is present at asparagine 99. Positions aspartate 110–arginine 1007 are isomaltase. Aspartate 264 and aspartate 388 together coordinate substrate. Residues tyrosine 391 and tyrosine 400 each carry the sulfotyrosine modification. N-linked (GlcNAc...) asparagine glycosylation occurs at asparagine 455. The active-site Nucleophile; for isomaltase activity is the aspartate 505. Cysteine 520 and cysteine 545 form a disulfide bridge. Position 588 (arginine 588) interacts with substrate. Aspartate 604 serves as the catalytic For isomaltase activity. A disulfide bond links cysteine 635 and cysteine 646. Histidine 662 serves as a coordination point for substrate. Asparagine 859, asparagine 896, and asparagine 904 each carry an N-linked (GlcNAc...) asparagine glycan. One can recognise a P-type 2 domain in the interval aspartate 932–lysine 978. The interval isoleucine 1008–serine 1827 is sucrase. 6 N-linked (GlcNAc...) asparagine glycosylation sites follow: asparagine 1235, asparagine 1303, asparagine 1325, asparagine 1340, asparagine 1354, and asparagine 1368. Tyrosine 1382 and tyrosine 1385 each carry sulfotyrosine. The active-site Nucleophile; for sucrase activity is aspartate 1394. Glutamate 1397 acts as the For sucrase activity in catalysis. Asparagine 1403 carries an N-linked (GlcNAc...) asparagine glycan. Aspartate 1500 (proton donor; for sucrase activity) is an active-site residue. 5 N-linked (GlcNAc...) asparagine glycosylation sites follow: asparagine 1535, asparagine 1572, asparagine 1748, asparagine 1763, and asparagine 1799.

It belongs to the glycosyl hydrolase 31 family. As to quaternary structure, the resulting sucrase and isomaltase subunits stay associated with one another in a complex by non-covalent linkages. The precursor is proteolytically cleaved when exposed to pancreatic proteases in the intestinal lumen. In terms of processing, N- and O-glycosylated. Post-translationally, sulfated.

It is found in the apical cell membrane. It catalyses the reaction Hydrolysis of sucrose and maltose by an alpha-D-glucosidase-type action.. The enzyme catalyses Hydrolysis of (1-&gt;6)-alpha-D-glucosidic linkages in some oligosaccharides produced from starch and glycogen by alpha-amylase, and in isomaltose.. Functionally, plays an important role in the final stage of carbohydrate digestion. Isomaltase activity is specific for both alpha-1,4- and alpha-1,6-oligosaccharides. In Oryctolagus cuniculus (Rabbit), this protein is Sucrase-isomaltase, intestinal (SI).